The following is a 373-amino-acid chain: Aminomethyltransferase (373 aa).

Belongs to the GcvT family. The glycine cleavage system is composed of four proteins: P, T, L and H.

It catalyses the reaction N(6)-[(R)-S(8)-aminomethyldihydrolipoyl]-L-lysyl-[protein] + (6S)-5,6,7,8-tetrahydrofolate = N(6)-[(R)-dihydrolipoyl]-L-lysyl-[protein] + (6R)-5,10-methylene-5,6,7,8-tetrahydrofolate + NH4(+). The glycine cleavage system catalyzes the degradation of glycine. In Prochlorococcus marinus (strain SARG / CCMP1375 / SS120), this protein is Aminomethyltransferase.